Consider the following 444-residue polypeptide: Endothelin-3 receptor (444 aa).

The signal sequence occupies residues 1–18 (MATVILFVAWMACLMVGV). Residues 19–88 (CYQEFQTQQN…SRAKIRHAFK (70 aa)) lie on the Extracellular side of the membrane. Asn60 carries an N-linked (GlcNAc...) asparagine glycan. Residues 89 to 113 (YVTTILSCVIFLVGIVGNSTLLRII) form a helical membrane-spanning segment. Residues 114-124 (YKNKCMRNGPN) are Cytoplasmic-facing. Residues 125 to 145 (VLIASLALGDLFYILIAIPII) form a helical membrane-spanning segment. The Extracellular segment spans residues 146-161 (SISFWLSTGHSEYIYQ). A helical membrane pass occupies residues 162 to 180 (LVHLYRARVYSLSLCALSI). Residues 181-201 (DRYRAVASWNRIRSIGIPVRK) are Cytoplasmic-facing. The helical transmembrane segment at 202–226 (AIELTLIWAVAIIVAVPEAIAFNLV) threads the bilayer. At 227 to 254 (ELDFRGQTILVCMLPMEQTSDFMRFYQE) the chain is on the extracellular side. Residues 255-279 (VKVWWLFGFYFCLPLACTGVFYTLM) form a helical membrane-spanning segment. Over 280-307 (SCEMLSIKNGMRIALNDHMKQRREVAKT) the chain is Cytoplasmic. A helical transmembrane segment spans residues 308–328 (VFCLVVIFALCWLPLHVSSIF). Residues 329-365 (VRLSATVKRACILKNKRSCIMAEIQTGVNYQLLMVMN) are Extracellular-facing. Residues 366–386 (YTGINMASLNSCIGPVALYFV) form a helical membrane-spanning segment. Residues 387–444 (SRKFKNCFQSCLCCWCHRPTLTITPMDEKGSGGKWKANGHDLDLDRSSSRLSNKYSSS) are Cytoplasmic-facing. Positions 416 to 444 (GSGGKWKANGHDLDLDRSSSRLSNKYSSS) are disordered. The segment covering 424–434 (NGHDLDLDRSS) has biased composition (basic and acidic residues). Residues 435–444 (SRLSNKYSSS) are compositionally biased toward low complexity.

Belongs to the G-protein coupled receptor 1 family. Endothelin receptor subfamily.

Its subcellular location is the cell membrane. Functionally, receptor for endothelin-3. Mediates its action by association with G proteins that activate a phosphatidylinositol-calcium second messenger system. This Xenopus laevis (African clawed frog) protein is Endothelin-3 receptor.